The sequence spans 178 residues: GTP-dependent dephospho-CoA kinase (178 aa).

5 residues coordinate GTP: Asp55, Val57, Asp74, Lys76, and Glu127.

It belongs to the GTP-dependent DPCK family.

The catalysed reaction is 3'-dephospho-CoA + GTP = GDP + CoA + H(+). Its pathway is cofactor biosynthesis; coenzyme A biosynthesis. Functionally, catalyzes the GTP-dependent phosphorylation of the 3'-hydroxyl group of dephosphocoenzyme A to form coenzyme A (CoA). The protein is GTP-dependent dephospho-CoA kinase of Saccharolobus islandicus (strain Y.N.15.51 / Yellowstone #2) (Sulfolobus islandicus).